Reading from the N-terminus, the 226-residue chain is PKHD-type hydroxylase mma_3620 (226 aa).

The region spanning 78 to 178 is the Fe2OG dioxygenase domain; it reads RYMPPLFNRY…RVCSFFWLQS (101 aa). Residues histidine 96, aspartate 98, and histidine 159 each contribute to the Fe cation site. Arginine 169 contacts 2-oxoglutarate.

Fe(2+) serves as cofactor. It depends on L-ascorbate as a cofactor.

This Janthinobacterium sp. (strain Marseille) (Minibacterium massiliensis) protein is PKHD-type hydroxylase mma_3620.